Consider the following 505-residue polypeptide: Endoglucanase 5 (505 aa).

The first 31 residues, 1-31 (MWMRRNQIVRKLTLGVVTTVLGMSLSFSALS), serve as a signal peptide directing secretion. Residues 32–334 (ATPVETHGQL…REQIRAGANL (303 aa)) form a catalytic region. Residues H64, 68–69 (WF), Y95, and H130 contribute to the substrate site. E168 acts as the Proton donor in catalysis. Y230 contacts substrate. The active-site Nucleophile is the E256. Residues 262-263 (AS), W290, and 295-297 (KSE) contribute to the substrate site. The tract at residues 332–355 (ANLGGGDTPTTPTEPTNPGNGTTG) is disordered. Residues 335–352 (GGGDTPTTPTEPTNPGNG) are linker. Over residues 339-355 (TPTTPTEPTNPGNGTTG) the composition is skewed to low complexity. One can recognise a CBM3 domain in the interval 353-505 (TTGDVVLQYR…KGTLVWGVEP (153 aa)).

This sequence belongs to the glycosyl hydrolase 5 (cellulase A) family.

Its subcellular location is the secreted. The catalysed reaction is Endohydrolysis of (1-&gt;4)-beta-D-glucosidic linkages in cellulose, lichenin and cereal beta-D-glucans.. Functionally, endoglucanase with some exoglucanase activity. The polypeptide is Endoglucanase 5 (celV) (Pectobacterium carotovorum subsp. carotovorum (Erwinia carotovora subsp. carotovora)).